A 975-amino-acid chain; its full sequence is Glycine dehydrogenase (decarboxylating) (975 aa).

N6-(pyridoxal phosphate)lysine is present on K723.

It belongs to the GcvP family. The glycine cleavage system is composed of four proteins: P, T, L and H. The cofactor is pyridoxal 5'-phosphate.

It catalyses the reaction N(6)-[(R)-lipoyl]-L-lysyl-[glycine-cleavage complex H protein] + glycine + H(+) = N(6)-[(R)-S(8)-aminomethyldihydrolipoyl]-L-lysyl-[glycine-cleavage complex H protein] + CO2. Its function is as follows. The glycine cleavage system catalyzes the degradation of glycine. The P protein binds the alpha-amino group of glycine through its pyridoxal phosphate cofactor; CO(2) is released and the remaining methylamine moiety is then transferred to the lipoamide cofactor of the H protein. The polypeptide is Glycine dehydrogenase (decarboxylating) (Burkholderia ambifaria (strain MC40-6)).